The sequence spans 188 residues: HTH-type transcriptional regulator QacR (188 aa).

One can recognise an HTH tetR-type domain in the interval 1-61 (MNLKDKILGV…EILNIEESKW (61 aa)). A DNA-binding region (H-T-H motif) is located at residues 24–43 (TTGEIVKLSESSKGNLYYHF).

In terms of assembly, homodimer. Binds cooperatively to DNA as a pair of dimers.

Functionally, transcriptional repressor of qacA. Binds to IR1, an unusually long 28 bp operator, which is located downstream from the qacA promoter and overlaps its transcription start site. QacR is induced from its IR1 site by binding to one of many structurally dissimilar cationic lipophilic compounds, which are also substrates of QacA. In Staphylococcus aureus (strain Mu50 / ATCC 700699), this protein is HTH-type transcriptional regulator QacR (qacR).